Reading from the N-terminus, the 171-residue chain is 3-hydroxydecanoyl-[acyl-carrier-protein] dehydratase (171 aa).

The active site involves H70.

It belongs to the thioester dehydratase family. FabA subfamily. As to quaternary structure, homodimer.

It localises to the cytoplasm. It carries out the reaction a (3R)-hydroxyacyl-[ACP] = a (2E)-enoyl-[ACP] + H2O. It catalyses the reaction (3R)-hydroxydecanoyl-[ACP] = (2E)-decenoyl-[ACP] + H2O. The catalysed reaction is (2E)-decenoyl-[ACP] = (3Z)-decenoyl-[ACP]. The protein operates within lipid metabolism; fatty acid biosynthesis. In terms of biological role, necessary for the introduction of cis unsaturation into fatty acids. Catalyzes the dehydration of (3R)-3-hydroxydecanoyl-ACP to E-(2)-decenoyl-ACP and then its isomerization to Z-(3)-decenoyl-ACP. Can catalyze the dehydratase reaction for beta-hydroxyacyl-ACPs with saturated chain lengths up to 16:0, being most active on intermediate chain length. The sequence is that of 3-hydroxydecanoyl-[acyl-carrier-protein] dehydratase from Mesorhizobium japonicum (strain LMG 29417 / CECT 9101 / MAFF 303099) (Mesorhizobium loti (strain MAFF 303099)).